The following is a 686-amino-acid chain: Myb-related protein B (686 aa).

Positions 1–28 (MARRSRGEDQDELHCQDTDSDVPEQRDG) are disordered. HTH myb-type domains lie at 26-77 (RDGR…LRVL), 78-133 (NPDL…NPEV), and 134-184 (KKSS…KRKV). DNA-binding regions (H-T-H motif) lie at residues 54-77 (WKFL…LRVL), 106-129 (WTLI…HNHL), and 157-180 (WAEI…NSTI). Disordered regions lie at residues 315–355 (CDLT…VTEY) and 493–512 (YVVD…LEKY). Low complexity predominate over residues 326–343 (PSAGSSSSSNSPVRQTPS).

As to quaternary structure, component of the DREAM complex. In terms of tissue distribution, expressed in hematopoietic and non hematopoietic cells.

It is found in the nucleus. In terms of biological role, represses v-myb- and c-myb-mediated activation of the mim-1 gene, probably by competing with other myb proteins for binding sites. It is an inhibitory member of the myb family. The sequence is that of Myb-related protein B (MYBL2) from Gallus gallus (Chicken).